The primary structure comprises 460 residues: Cysteine--tRNA ligase (460 aa).

Cys28 serves as a coordination point for Zn(2+). A 'HIGH' region motif is present at residues 30 to 40; the sequence is MTVYDYCHLGH. Zn(2+) is bound by residues Cys209, His234, and Glu238. The short motif at 266–270 is the 'KMSKS' region element; the sequence is KMSKS. Lys269 provides a ligand contact to ATP.

It belongs to the class-I aminoacyl-tRNA synthetase family. Monomer. The cofactor is Zn(2+).

It is found in the cytoplasm. The enzyme catalyses tRNA(Cys) + L-cysteine + ATP = L-cysteinyl-tRNA(Cys) + AMP + diphosphate. This chain is Cysteine--tRNA ligase, found in Pseudomonas paraeruginosa (strain DSM 24068 / PA7) (Pseudomonas aeruginosa (strain PA7)).